A 147-amino-acid polypeptide reads, in one-letter code: Ribosome-binding factor A (147 aa).

The interval 127 to 147 is disordered; the sequence is AAEARHAGEPDPYKTDRDDAE.

Belongs to the RbfA family. In terms of assembly, monomer. Binds 30S ribosomal subunits, but not 50S ribosomal subunits or 70S ribosomes.

It is found in the cytoplasm. In terms of biological role, one of several proteins that assist in the late maturation steps of the functional core of the 30S ribosomal subunit. Associates with free 30S ribosomal subunits (but not with 30S subunits that are part of 70S ribosomes or polysomes). Required for efficient processing of 16S rRNA. May interact with the 5'-terminal helix region of 16S rRNA. This chain is Ribosome-binding factor A, found in Nocardia farcinica (strain IFM 10152).